A 95-amino-acid chain; its full sequence is LSM complex subunit LSM2 (95 aa).

A Sm domain is found at 2-76 (LFFSFFKTLV…VRYVYLNKNM (75 aa)).

It belongs to the snRNP Sm proteins family. As to quaternary structure, component of the heptameric LSM1-LSM7 complex that forms a seven-membered ring structure with a donut shape. The LSm subunits are arranged in the order LSM1, LSM2, LSM3, LSM6, LSM5, LSM7 and LSM4. Except for LSM1, where a C-terminal helix crosses the ring structure to form additional interactions with LSM3 and LSM6, each subunit interacts only with its two neighboring subunits. The LSM1-LSM7 complex interacts with PAT1; within the complex PAT1 has direct interactions with LSM2 and LSM3. The LSM1-LSM7 complex interacts with XRN1. Component of the heptameric LSM2-LSM8 complex that forms a seven-membered ring structure with a donut shape; an RNA strand can pass through the hole in the center of the ring structure. The LSm subunits are arranged in the order LSM8, LSM2, LSM3, LSM6, LSM5, LSM7 and LSM4. Interacts with U6 snRNA SNR6 and chaperone PRP24; to promote formation of the U4/U6-U5 tri-snRNP (small nuclear ribonucleoprotein) complex, the LSM2-LSM8 complex preferentially binds U6 snRNA that has been modified to contain a non-cyclic 3' phosphate. Component of the spliceosome U4/U6-U5 tri-snRNP complex composed of the U4, U6 and U5 snRNAs and at least PRP3, PRP4, PRP6, PRP8, PRP18, PRP31, PRP38, SNU13, SNU23, SNU66, SNU114, SPP381, SMB1, SMD1, SMD2, SMD3, SMX2, SMX3, LSM2, LSM3, LSM4, LSM5, LSM6, LSM7, LSM8, BRR2 and DIB1. May be found in a complex comprising LSM2-LSM7 without LSM1 or LSM8; the complex associates with pre-P RNA and snoRNA SNR5.

The protein resides in the nucleus. It is found in the nucleolus. The protein localises to the cytoplasm. In terms of biological role, component of LSm protein complexes, which are involved in RNA processing and may function in a chaperone-like manner. Component of the cytoplasmic LSM1-LSM7 complex which is involved in mRNA degradation by activating the decapping step. Together with PAT1, the LSM1-LSM7 complex binds to osmotic stress-activated mRNAs to attenuate the osmotic stress response, probably by limiting ribosome access to the mRNA and consequently translation. Component of the nuclear LSM2-LSM8 complex, which is involved in spliceosome assembly. The LSM2-LSM8 complex plays a role in the biogenesis of the spliceosomal U4/U6-U5 tri-snRNP complex by accelerating PRP24-mediated annealing of U4/U6 di-snRNA. The LSM2-LSM8 complex binds U6 snRNA terminating with a non-cyclic 3' phosphate group. LSM2-LSM8 is probably also involved in degradation of nuclear pre-mRNA by targeting them for decapping. LSM2-LSM8 could be involved in processing of pre-tRNAs, pre-rRNAs and U3 snoRNA, although involvement may be indirect. In a complex that probably contains LSM2-LSM7, but not LSM1 or LSM8, associates with the precursor of the RNA component of RNase P (pre-P RNA) and may be involved in maturing pre-P RNA; the complex also associates with snoRNA SNR5. This Saccharomyces cerevisiae (strain ATCC 204508 / S288c) (Baker's yeast) protein is LSM complex subunit LSM2 (LSM2).